A 692-amino-acid polypeptide reads, in one-letter code: Elongation factor G (692 aa).

A tr-type G domain is found at 8 to 282 (ENTRNIGIMA…AVIDYLPSPL (275 aa)). GTP is bound by residues 17–24 (AHIDAGKT), 81–85 (DTPGH), and 135–138 (NKMD).

This sequence belongs to the TRAFAC class translation factor GTPase superfamily. Classic translation factor GTPase family. EF-G/EF-2 subfamily.

The protein resides in the cytoplasm. Functionally, catalyzes the GTP-dependent ribosomal translocation step during translation elongation. During this step, the ribosome changes from the pre-translocational (PRE) to the post-translocational (POST) state as the newly formed A-site-bound peptidyl-tRNA and P-site-bound deacylated tRNA move to the P and E sites, respectively. Catalyzes the coordinated movement of the two tRNA molecules, the mRNA and conformational changes in the ribosome. The sequence is that of Elongation factor G from Bacillus cereus (strain ATCC 14579 / DSM 31 / CCUG 7414 / JCM 2152 / NBRC 15305 / NCIMB 9373 / NCTC 2599 / NRRL B-3711).